Consider the following 92-residue polypeptide: Large ribosomal subunit protein eL31 (92 aa).

The protein belongs to the eukaryotic ribosomal protein eL31 family.

The sequence is that of Large ribosomal subunit protein eL31 from Desulfurococcus amylolyticus (strain DSM 18924 / JCM 16383 / VKM B-2413 / 1221n) (Desulfurococcus kamchatkensis).